A 166-amino-acid chain; its full sequence is Coiled-coil domain-containing protein 12 (166 aa).

An N-acetylmethionine modification is found at M1. A disordered region spans residues 1 to 56 (MEATTAGVGRLEEEALRRKERLKALREKTGRKDKEDGEPKTKHLREEEEEGEKHRE). Positions 8–28 (VGRLEEEALRRKERLKALREK) form a coiled coil. Basic and acidic residues predominate over residues 10-56 (RLEEEALRRKERLKALREKTGRKDKEDGEPKTKHLREEEEEGEKHRE). At K53 the chain carries N6-acetyllysine. K94 participates in a covalent cross-link: Glycyl lysine isopeptide (Lys-Gly) (interchain with G-Cter in SUMO2). Positions 117–144 (KRDVAKKLEKLKKRTQRAIAELIRERLK) form a coiled coil. Positions 147–166 (EDSLASAVDAATEQKTCDSD) are disordered. Phosphoserine occurs at positions 149 and 165.

This chain is Coiled-coil domain-containing protein 12 (CCDC12), found in Homo sapiens (Human).